The sequence spans 110 residues: UPF0122 protein SGO_1122 (110 aa).

It belongs to the UPF0122 family.

Its function is as follows. Might take part in the signal recognition particle (SRP) pathway. This is inferred from the conservation of its genetic proximity to ftsY/ffh. May be a regulatory protein. This Streptococcus gordonii (strain Challis / ATCC 35105 / BCRC 15272 / CH1 / DL1 / V288) protein is UPF0122 protein SGO_1122.